Reading from the N-terminus, the 576-residue chain is M-phase inducer phosphatase 2 (576 aa).

Ser-42 bears the Phosphoserine mark. Residues 90–105 (RRTSECSLSSESSESS) show a composition bias toward low complexity. The interval 90-119 (RRTSECSLSSESSESSDAGLCMDSPSPVDP) is disordered. Ser-167 carries the phosphoserine; by MELK modification. Position 248 is a phosphoserine (Ser-248). Residue Ser-321 is modified to Phosphoserine; by MELK and MAPK14. Positions 338–358 (QDRDVPVQSKRRKSVTPLEEQ) are disordered. Residue Ser-351 is modified to Phosphoserine; by AURKA. Ser-372 is modified (phosphoserine; by BRSK1 and MAPK14). Residues 427–534 (IVEKFVIVDC…FFPQHPNFCE (108 aa)) form the Rhodanese domain. The active site involves Cys-483. Ser-559 is modified (phosphoserine).

The protein belongs to the MPI phosphatase family. Interacts with MAPK14 and 14-3-3 proteins. In terms of processing, phosphorylated by BRSK1 in vitro. Phosphorylated by CHEK1, which inhibits the activity of this protein. Phosphorylation at Ser-351 by AURKA might locally participate in the control of the onset of mitosis. Phosphorylation by MELK at Ser-167 promotes localization to the centrosome and the spindle poles during mitosis. Phosphorylation at Ser-321 and Ser-372 by MAPK14 is required for binding to 14-3-3 proteins. Expressed predominantly in spleen, lung, heart, brain, intestine, and muscle.

The protein localises to the cytoplasm. The protein resides in the cytoskeleton. Its subcellular location is the microtubule organizing center. It is found in the centrosome. It localises to the spindle pole. It carries out the reaction O-phospho-L-tyrosyl-[protein] + H2O = L-tyrosyl-[protein] + phosphate. With respect to regulation, stimulated by B-type cyclins. In terms of biological role, tyrosine protein phosphatase which functions as a dosage-dependent inducer of mitotic progression. Directly dephosphorylates CDK1 and stimulates its kinase activity. Required for G2/M phases of the cell cycle progression and abscission during cytokinesis in a ECT2-dependent manner. The three isoforms seem to have a different level of activity. The sequence is that of M-phase inducer phosphatase 2 (Cdc25b) from Mus musculus (Mouse).